Here is a 370-residue protein sequence, read N- to C-terminus: mRNA cap guanine-N(7) methyltransferase 1 (370 aa).

The span at 1 to 11 shows a compositional bias: low complexity; the sequence is MKRGFSDSPSS. The segment at 1–34 is disordered; the sequence is MKRGFSDSPSSSAPPPSSRFKSNPEGDSQFLEDE. The mRNA cap 0 methyltransferase domain occupies 61–341; it reads SPIIHLKKLN…LYLSFVLRKR (281 aa). Residue 70–71 participates in mRNA binding; that stretch reads NN. S-adenosyl-L-methionine contacts are provided by residues lysine 74, alanine 92, aspartate 114, 150–151, and 172–174; these read DC and QFA.

This sequence belongs to the class I-like SAM-binding methyltransferase superfamily. mRNA cap 0 methyltransferase family.

It localises to the nucleus. It catalyses the reaction a 5'-end (5'-triphosphoguanosine)-ribonucleoside in mRNA + S-adenosyl-L-methionine = a 5'-end (N(7)-methyl 5'-triphosphoguanosine)-ribonucleoside in mRNA + S-adenosyl-L-homocysteine. In terms of biological role, mRNA-capping methyltransferase that methylates the N7 position of the added guanosine to the 5'-cap structure of mRNAs. Binds RNA containing 5'-terminal GpppC. This is mRNA cap guanine-N(7) methyltransferase 1 from Arabidopsis thaliana (Mouse-ear cress).